An 83-amino-acid chain; its full sequence is Cell division topological specificity factor (83 aa).

The protein belongs to the MinE family.

Prevents the cell division inhibition by proteins MinC and MinD at internal division sites while permitting inhibition at polar sites. This ensures cell division at the proper site by restricting the formation of a division septum at the midpoint of the long axis of the cell. The protein is Cell division topological specificity factor of Acidithiobacillus ferrooxidans (strain ATCC 23270 / DSM 14882 / CIP 104768 / NCIMB 8455) (Ferrobacillus ferrooxidans (strain ATCC 23270)).